Reading from the N-terminus, the 224-residue chain is Ribonuclease HII (224 aa).

Positions 36-224 (RGVAGVDEVG…RRSFLRRFLG (189 aa)) constitute an RNase H type-2 domain. Residues aspartate 42, glutamate 43, and aspartate 138 each contribute to the a divalent metal cation site.

This sequence belongs to the RNase HII family. Requires Mn(2+) as cofactor. Mg(2+) serves as cofactor.

It is found in the cytoplasm. It carries out the reaction Endonucleolytic cleavage to 5'-phosphomonoester.. Endonuclease that specifically degrades the RNA of RNA-DNA hybrids. The chain is Ribonuclease HII from Parasynechococcus marenigrum (strain WH8102).